Reading from the N-terminus, the 247-residue chain is E3 ubiquitin-protein ligase RNF182 (247 aa).

The RING-type zinc-finger motif lies at 20-68; the sequence is CKICYNRYNLKQRKPKVLECCHRVCAKCLYKIIDFGDSPQGVIVCPFCR. The next 2 helical transmembrane spans lie at 184 to 204 and 211 to 231; these read VLVW…IYLL and LGVV…VYGF.

In terms of assembly, interacts with ATP6V0C.

The protein localises to the membrane. Its subcellular location is the cytoplasm. The enzyme catalyses S-ubiquitinyl-[E2 ubiquitin-conjugating enzyme]-L-cysteine + [acceptor protein]-L-lysine = [E2 ubiquitin-conjugating enzyme]-L-cysteine + N(6)-ubiquitinyl-[acceptor protein]-L-lysine.. The protein operates within protein modification; protein ubiquitination. E3 ubiquitin-protein ligase that mediates the ubiquitination of ATP6V0C and targets it to degradation via the ubiquitin-proteasome pathway. Also plays a role in the inhibition of TLR-triggered innate immune response by mediating 'Lys'-48-linked ubiquitination and subsequent degradation of NF-kappa-B component RELA. This Ailuropoda melanoleuca (Giant panda) protein is E3 ubiquitin-protein ligase RNF182 (RNF182).